A 366-amino-acid chain; its full sequence is MNKVVLYCRPGFEKECAAEITDKAARLEVFGFARVKEDSGYVIFEGYQQDDGEKLVRDLPFSSLIFARQMFVVGELLRDLPPEDRITPIVGMLQGVVEKGGELRVEVADTNESKELMKFCRKFTVPLRAALREAGVLTNYETPKRPVVHVFFIAPGCCYTGYSYSNNNSPFYMGIPRLKFPSDAPSRSTLKLEEAFHVFIPADEWDERLANGMYAVDLGACPGGWTYQLVKRNMWVSSVDNGPMAQSLMDTGQVTWLREDGFRYRPNRNNISWMVCDMVEKPAKVAALMAQWLVNGWCRETIFNLKLPMKKRYEEVSQNLAYIQAQLDEHGINAQIQARQLYHDREEVTVHVRRLWAAVGGRRDER.

Residues serine 188, 221–224 (CPGG), aspartate 240, aspartate 260, and aspartate 277 each bind S-adenosyl-L-methionine. The active-site Proton acceptor is the lysine 306.

This sequence belongs to the class I-like SAM-binding methyltransferase superfamily. RNA methyltransferase RlmE family. RlmM subfamily. Monomer.

The protein localises to the cytoplasm. The catalysed reaction is cytidine(2498) in 23S rRNA + S-adenosyl-L-methionine = 2'-O-methylcytidine(2498) in 23S rRNA + S-adenosyl-L-homocysteine + H(+). Functionally, catalyzes the 2'-O-methylation at nucleotide C2498 in 23S rRNA. The chain is Ribosomal RNA large subunit methyltransferase M from Klebsiella pneumoniae (strain 342).